A 1012-amino-acid chain; its full sequence is MTNLQDQTQQIVPFIRSLLMPTTGPASIPDDTLEKHTLRSETSTYNLTVGDTGSGLIVFFPGFPGSIVGAHYTLQSNGNLKFDQMLLTAQNLPASYNYCRLVSRSLTVRSSTLPGGVYALNGTINAVTFQGSLSELTDVSYNGLMSATANINDKIGNVLVGEGVTVLSLPTSYDLGYVRLGDPIPAIGLDPKMVATCDSSDRPRVYTITAADDYQFSSQYQPGGVTITLFSANIDAITSLSVGGELVFQTSVQGLVLGATIYFIGFDGTTVITRAVAADNGLTAGTDNLMPFNLVIPTNEITQPITSIKLEVVTSKSGGQAGDQMSWSASGSLAVTIHGGNYPGALRPVTLVAYERVATGSVVTVAGVSNFELIPNPELAKNLVTEYGRFDPGAMNYTKLILSERDRLGIKTVWPTREYTDFREYFMEVADLNSPLKIAGAFGFKDIIRAIRRIAVPVVSTLFPPAAPLAHAIGEGVDYLLGDEAQAASGTARAASGKARAASGRIRQLTLAADKGYEVVANLFQVPQNPVVDGILASPGVLRGAHNLDCVLREGATLFPVVITTVEDAMTPKALNSKIFAVIEGVREDLQPPSQRGSFIRTLSGHRVYGYAPDGVLPLETGRDYTVVPIDDVWDDSIMLSKDPIPPIVGNSGNLAIAYMDVFRPKVPIHVAMTGALNAFGEIEKVSFRSTKLATAHRLGLKLAGPGAFDVNTGPNWATFIKRFPHNPRDWDRLPYLNLPYLPPNAGRQYHLAMAASEFKETPELESAVRAMEAAANVDPLFQSALSVFMWLEENGIVTDMANFALSDPNAHRMRNFLANAPQAGSKSQRAKYGTAGYGVEARGPTPEEAQRAKDTRISKKMETMGIYFATPEWVALNGHRGPSPAQLKYWQNTREIPDPNEDYLDYVHAEKSRLASEEQILKAATSIYGAPGQAEPPQAFIDEVAKVYEINHGRGPNQEQMKDLLLTAMELKHRNPRRAPPKPKPKPNAPTQRPPGRLGRWIRTVSDEDLE.

Position 30 (Asp-30) interacts with a divalent metal cation. Positions 513 to 755 (ADKGYEVVAN…AGRQYHLAMA (243 aa)) constitute a Peptidase S50 domain. Catalysis depends on Ser-652, which acts as the Nucleophile. Lys-692 is an active-site residue. The segment at 969–1012 (AMELKHRNPRRAPPKPKPKPNAPTQRPPGRLGRWIRTVSDEDLE) is disordered. Residues 975–986 (RNPRRAPPKPKP) are compositionally biased toward basic residues. Residues 1003-1012 (IRTVSDEDLE) form an interaction with VP1 protein region.

Homotrimer. A central divalent metal stabilizes the VP2 trimer. Interacts with host ITGA4/ITGB1. In terms of assembly, homodimer. Interacts (via C-terminus) with VP1 in the cytoplasm. Interacts with VP2. Specific enzymatic cleavages yield mature proteins. The capsid assembly seems to be regulated by polyprotein processing. The protease VP4 cleaves itself off the polyprotein, thus releasing pre-VP2 and VP3 within the infected cell. During capsid assembly, the C-terminus of pre-VP2 is further processed by VP4, giving rise to VP2, the external capsid protein and three small peptides that all stay closely associated with the capsid.

Its subcellular location is the virion. The protein localises to the host cytoplasm. Functionally, capsid protein VP2 self assembles to form an icosahedral capsid with a T=13 symmetry, about 70 nm in diameter, and consisting of 260 VP2 trimers. The capsid encapsulates the genomic dsRNA. VP2 is also involved in attachment and entry into the host cell by interacting with host ITGA4/ITGB1. The precursor of VP2 plays an important role in capsid assembly. First, pre-VP2 and VP2 oligomers assemble to form a procapsid. Then, the pre-VP2 intermediates may be processed into VP2 proteins by proteolytic cleavage mediated by VP4 to obtain the mature virion. The final capsid is composed of pentamers and hexamers but VP2 has a natural tendency to assemble into all-pentameric structures. Therefore pre-VP2 may be required to allow formation of the hexameric structures. In terms of biological role, protease VP4 is a serine protease that cleaves the polyprotein into its final products. Pre-VP2 is first partially cleaved, and may be completely processed by VP4 upon capsid maturation. Its function is as follows. Capsid protein VP3 plays a key role in virion assembly by providing a scaffold for the capsid made of VP2. May self-assemble to form a T=4-like icosahedral inner-capsid composed of at least 180 trimers. Plays a role in genomic RNA packaging by recruiting VP1 into the capsid and interacting with the dsRNA genome segments to form a ribonucleoprotein complex. Additionally, the interaction of the VP3 C-terminal tail with VP1 removes the inherent structural blockade of the polymerase active site. Thus, VP3 can also function as a transcriptional activator. Functionally, structural peptide 1 is a small peptide derived from pre-VP2 C-terminus. It destabilizes and perforates cell membranes, suggesting a role during entry. Structural peptide 2 is a small peptide derived from pVP2 C-terminus. It is not essential for the virus viability, but viral growth is affected when missing. In terms of biological role, structural peptide 3 is a small peptide derived from pVP2 C-terminus. It is not essential for the virus viability, but viral growth is affected when missing. Its function is as follows. Structural peptide 4 is a small peptide derived from pVP2 C-terminus. It is essential for the virus viability. In Avian infectious bursal disease virus (strain STC) (IBDV), this protein is Structural polyprotein.